The following is a 321-amino-acid chain: Glucokinase (321 aa).

Position 8–13 (8–13 (GDVGGT)) interacts with ATP.

This sequence belongs to the bacterial glucokinase family.

The protein localises to the cytoplasm. The catalysed reaction is D-glucose + ATP = D-glucose 6-phosphate + ADP + H(+). This Citrobacter koseri (strain ATCC BAA-895 / CDC 4225-83 / SGSC4696) protein is Glucokinase.